Here is a 569-residue protein sequence, read N- to C-terminus: Urease subunit alpha (569 aa).

The 439-residue stretch at 131-569 (GGFDSHIHFI…LPMAQRYFLF (439 aa)) folds into the Urease domain. Ni(2+) is bound by residues H136, H138, and K219. Residue K219 is modified to N6-carboxylysine. H221 contacts substrate. Residues H248 and H274 each contribute to the Ni(2+) site. H322 acts as the Proton donor in catalysis. Residue D362 participates in Ni(2+) binding.

The protein belongs to the metallo-dependent hydrolases superfamily. Urease alpha subunit family. In terms of assembly, heterotrimer of UreA (gamma), UreB (beta) and UreC (alpha) subunits. Three heterotrimers associate to form the active enzyme. It depends on Ni cation as a cofactor. Post-translationally, carboxylation allows a single lysine to coordinate two nickel ions.

The protein resides in the cytoplasm. The enzyme catalyses urea + 2 H2O + H(+) = hydrogencarbonate + 2 NH4(+). It participates in nitrogen metabolism; urea degradation; CO(2) and NH(3) from urea (urease route): step 1/1. In Ruegeria pomeroyi (strain ATCC 700808 / DSM 15171 / DSS-3) (Silicibacter pomeroyi), this protein is Urease subunit alpha.